Reading from the N-terminus, the 1072-residue chain is Carbamoyl phosphate synthase large chain (1072 aa).

Residues 1–401 (MPKYKDINKV…SLLKAVRSLE (401 aa)) form a carboxyphosphate synthetic domain region. Positions 129, 169, 175, 176, 208, 210, 215, 241, 242, 243, 284, and 298 each coordinate ATP. Positions 133-327 (KRKMQEIGEP…IAKVAAKIAI (195 aa)) constitute an ATP-grasp 1 domain. Glutamine 284, glutamate 298, and asparagine 300 together coordinate Mg(2+). Glutamine 284, glutamate 298, and asparagine 300 together coordinate Mn(2+). The segment at 402-544 (IKAYGLRLNN…YIYSTYGEED (143 aa)) is oligomerization domain. The tract at residues 545-929 (EVEIHEIPKV…ALYKALEGAG (385 aa)) is carbamoyl phosphate synthetic domain. The ATP-grasp 2 domain occupies 671-861 (SKLLKELNIN…MVKLAVEVAL (191 aa)). Residues arginine 707, lysine 746, isoleucine 748, glutamate 752, glycine 777, valine 778, histidine 779, serine 780, glutamine 820, and glutamate 832 each coordinate ATP. The Mg(2+) site is built by glutamine 820, glutamate 832, and asparagine 834. Positions 820, 832, and 834 each coordinate Mn(2+). The region spanning 930–1072 (LKIPKKGKIL…QKDNVKNLVL (143 aa)) is the MGS-like domain. The allosteric domain stretch occupies residues 930 to 1072 (LKIPKKGKIL…QKDNVKNLVL (143 aa)).

This sequence belongs to the CarB family. Composed of two chains; the small (or glutamine) chain promotes the hydrolysis of glutamine to ammonia, which is used by the large (or ammonia) chain to synthesize carbamoyl phosphate. Tetramer of heterodimers (alpha,beta)4. It depends on Mg(2+) as a cofactor. Requires Mn(2+) as cofactor.

The enzyme catalyses hydrogencarbonate + L-glutamine + 2 ATP + H2O = carbamoyl phosphate + L-glutamate + 2 ADP + phosphate + 2 H(+). It catalyses the reaction hydrogencarbonate + NH4(+) + 2 ATP = carbamoyl phosphate + 2 ADP + phosphate + 2 H(+). The protein operates within amino-acid biosynthesis; L-arginine biosynthesis; carbamoyl phosphate from bicarbonate: step 1/1. It functions in the pathway pyrimidine metabolism; UMP biosynthesis via de novo pathway; (S)-dihydroorotate from bicarbonate: step 1/3. In terms of biological role, large subunit of the glutamine-dependent carbamoyl phosphate synthetase (CPSase). CPSase catalyzes the formation of carbamoyl phosphate from the ammonia moiety of glutamine, carbonate, and phosphate donated by ATP, constituting the first step of 2 biosynthetic pathways, one leading to arginine and/or urea and the other to pyrimidine nucleotides. The large subunit (synthetase) binds the substrates ammonia (free or transferred from glutamine from the small subunit), hydrogencarbonate and ATP and carries out an ATP-coupled ligase reaction, activating hydrogencarbonate by forming carboxy phosphate which reacts with ammonia to form carbamoyl phosphate. The chain is Carbamoyl phosphate synthase large chain from Thermoanaerobacter sp. (strain X514).